The following is a 146-amino-acid chain: MDATKTTKGAGGRKGGPRKKSVTKSIKAGLQFPVGRIGRYLKKGRYAQRVGSGAPIYLAAVLEYLAAEVLELAGNAARDNKKSRIIPRHVLLAVRNDEELGKLLAGVTIASGGVLPNINPVLLPKKSAVAEEKSPKAKAGKSPKKA.

Residue Met1 is modified to N-acetylmethionine. The segment at 1–24 is disordered; that stretch reads MDATKTTKGAGGRKGGPRKKSVTK. Residues 142 to 145 carry the SPKK motif motif; it reads SPKK.

It belongs to the histone H2A family. The nucleosome is a histone octamer containing two molecules each of H2A, H2B, H3 and H4 assembled in one H3-H4 heterotetramer and two H2A-H2B heterodimers. The octamer wraps approximately 147 bp of DNA. As to expression, high expression in meristematic tissues, in cells of the root pericycle and in shoot cortical cells undergoing endoduplication of their DNA.

The protein resides in the nucleus. It is found in the chromosome. In terms of biological role, core component of nucleosome. Nucleosomes wrap and compact DNA into chromatin, limiting DNA accessibility to the cellular machineries which require DNA as a template. Histones thereby play a central role in transcription regulation, DNA repair, DNA replication and chromosomal stability. DNA accessibility is regulated via a complex set of post-translational modifications of histones, also called histone code, and nucleosome remodeling. This chain is Histone H2A.1, found in Solanum lycopersicum (Tomato).